A 658-amino-acid polypeptide reads, in one-letter code: ATP-dependent RNA helicase MSS116, mitochondrial (658 aa).

The transit peptide at 1 to 35 (MFRVTGIATARAVALQPFRAPLGVIRRFGISATAS) directs the protein to the mitochondrion. Residues 40–79 (HGHDMQSRNGSRWDSRRQGDRRSSRWEGRGSDREDGERGS) show a composition bias toward basic and acidic residues. The segment at 40-104 (HGHDMQSRNG…DGAAREGFSL (65 aa)) is disordered. The Q motif motif lies at 126–154 (TLVEEGVLSNELYEMLQSRGFDKLTPVQQ). The Helicase ATP-binding domain maps to 158–343 (KPILQTEHDV…NSIMNHAKCL (186 aa)). ATP is bound at residue 171–178 (AKTGTGKT). The DEAD box signature appears at 284–287 (DEAD). Residues 372–528 (NITASLYKIR…TFDAAAQELS (157 aa)) form the Helicase C-terminal domain.

The protein belongs to the DEAD box helicase family. DDX18/HAS1 subfamily.

The protein resides in the mitochondrion matrix. It catalyses the reaction ATP + H2O = ADP + phosphate + H(+). In terms of biological role, ATP-dependent RNA helicase required for mitochondrial splicing of group I and II introns. Also required for efficient mitochondrial translation. The protein is ATP-dependent RNA helicase MSS116, mitochondrial (MSS116) of Eremothecium gossypii (strain ATCC 10895 / CBS 109.51 / FGSC 9923 / NRRL Y-1056) (Yeast).